The chain runs to 486 residues: Carboxypeptidase Y homolog ARB_07161 (486 aa).

The signal sequence occupies residues 1-17 (MKGLLSLLLVGAANALA). A glycan (N-linked (GlcNAc...) asparagine) is linked at Asn111. The active site involves Ser241. 3 cysteine pairs are disulfide-bonded: Cys281/Cys305, Cys288/Cys298, and Cys327/Cys334. Residue Asp403 is part of the active site. Cys406 is a substrate binding site. Asn430 carries N-linked (GlcNAc...) asparagine glycosylation. The active site involves His462.

The protein belongs to the peptidase S10 family.

It is found in the secreted. The enzyme catalyses Release of a C-terminal amino acid with broad specificity.. Functionally, involved in degradation of small peptides. The polypeptide is Carboxypeptidase Y homolog ARB_07161 (Arthroderma benhamiae (strain ATCC MYA-4681 / CBS 112371) (Trichophyton mentagrophytes)).